A 264-amino-acid polypeptide reads, in one-letter code: Myozenin-2 (264 aa).

Omega-N-methylarginine is present on Arg53. Residues Gly90–Pro135 are disordered. Position 101 is a phosphoserine (Ser101). The segment covering Ser106–Pro120 has biased composition (pro residues). Phosphothreonine occurs at positions 107 and 111. Phosphoserine is present on Ser116.

The protein belongs to the myozenin family. In terms of assembly, interacts via its C-terminus with spectrin repeats 3 and 4 of ACTN2. Interacts with ACTN1, LDB3, MYOT and PPP3CA. Expressed specifically in heart and skeletal muscle. In skeletal muscle, localized to the soleus and plantaris muscles, which are predominantly composed of slow-twitch fibers.

The protein localises to the cytoplasm. Its subcellular location is the myofibril. The protein resides in the sarcomere. It localises to the z line. In terms of biological role, myozenins may serve as intracellular binding proteins involved in linking Z line proteins such as alpha-actinin, gamma-filamin, TCAP/telethonin, LDB3/ZASP and localizing calcineurin signaling to the sarcomere. Plays an important role in the modulation of calcineurin signaling. May play a role in myofibrillogenesis. The sequence is that of Myozenin-2 from Mus musculus (Mouse).